We begin with the raw amino-acid sequence, 262 residues long: MSERESWHKEIDLFFVAMGYFTRIPMPKWVEVDADKLNKASRYFGLVGLLVGLLSAIIFWLTQNWLPAGVSVLLSMLTGILLTGGFHEDGLADTFDGFGGGWTAEDKLRIMKDSRLGSYGALALIMVLLLKWQLLVELALYDPVVAGSAMIVAHTVSRVVAASLIFTETYVRDDETSKSKPLAQHQGINDLFILIASGVLVLLVLKGIAALSLLLVMIGLRRLIVVIFRRQIGGYTGDTLGAAQQICEIVCYFVLLVVGGIL.

The next 6 membrane-spanning stretches (helical) occupy residues 43-63 (YFGL…WLTQ), 66-86 (LPAG…TGGF), 120-140 (GALA…ELAL), 146-166 (AGSA…SLIF), 191-211 (LFIL…IAAL), and 242-262 (AAQQ…GGIL).

Belongs to the CobS family. Mg(2+) serves as cofactor.

Its subcellular location is the cell inner membrane. It catalyses the reaction alpha-ribazole + adenosylcob(III)inamide-GDP = adenosylcob(III)alamin + GMP + H(+). It carries out the reaction alpha-ribazole 5'-phosphate + adenosylcob(III)inamide-GDP = adenosylcob(III)alamin 5'-phosphate + GMP + H(+). It participates in cofactor biosynthesis; adenosylcobalamin biosynthesis; adenosylcobalamin from cob(II)yrinate a,c-diamide: step 7/7. Its function is as follows. Joins adenosylcobinamide-GDP and alpha-ribazole to generate adenosylcobalamin (Ado-cobalamin). Also synthesizes adenosylcobalamin 5'-phosphate from adenosylcobinamide-GDP and alpha-ribazole 5'-phosphate. This chain is Adenosylcobinamide-GDP ribazoletransferase, found in Shewanella oneidensis (strain ATCC 700550 / JCM 31522 / CIP 106686 / LMG 19005 / NCIMB 14063 / MR-1).